We begin with the raw amino-acid sequence, 136 residues long: NADPH-dependent 7-cyano-7-deazaguanine reductase (136 aa).

The Thioimide intermediate role is filled by Cys-50. The Proton donor role is filled by Asp-57. Substrate is bound by residues 72–74 (YEL) and 91–92 (HE).

This sequence belongs to the GTP cyclohydrolase I family. QueF type 1 subfamily.

It is found in the cytoplasm. The catalysed reaction is 7-aminomethyl-7-carbaguanine + 2 NADP(+) = 7-cyano-7-deazaguanine + 2 NADPH + 3 H(+). Its pathway is tRNA modification; tRNA-queuosine biosynthesis. Functionally, catalyzes the NADPH-dependent reduction of 7-cyano-7-deazaguanine (preQ0) to 7-aminomethyl-7-deazaguanine (preQ1). This is NADPH-dependent 7-cyano-7-deazaguanine reductase from Prochlorococcus marinus (strain MIT 9515).